Reading from the N-terminus, the 459-residue chain is Phosphoenolpyruvate carboxylase (459 aa).

Belongs to the PEPCase type 2 family. As to quaternary structure, homotetramer. Mg(2+) is required as a cofactor.

The catalysed reaction is oxaloacetate + phosphate = phosphoenolpyruvate + hydrogencarbonate. Its function is as follows. Catalyzes the irreversible beta-carboxylation of phosphoenolpyruvate (PEP) to form oxaloacetate (OAA), a four-carbon dicarboxylic acid source for the tricarboxylic acid cycle. The protein is Phosphoenolpyruvate carboxylase of Pyrobaculum calidifontis (strain DSM 21063 / JCM 11548 / VA1).